The sequence spans 263 residues: Flagellar L-ring protein (263 aa).

The first 15 residues, 1–15 (MKRLLCLLLLTTLTG), serve as a signal peptide directing secretion. C16 carries the N-palmitoyl cysteine lipid modification. C16 carries the S-diacylglycerol cysteine lipid modification. The segment at 123 to 143 (KSADAELSKSNDSSMDPLQVG) is disordered.

Belongs to the FlgH family. In terms of assembly, the basal body constitutes a major portion of the flagellar organelle and consists of four rings (L,P,S, and M) mounted on a central rod.

The protein localises to the cell outer membrane. The protein resides in the bacterial flagellum basal body. Assembles around the rod to form the L-ring and probably protects the motor/basal body from shearing forces during rotation. The sequence is that of Flagellar L-ring protein from Aliivibrio fischeri (strain ATCC 700601 / ES114) (Vibrio fischeri).